Reading from the N-terminus, the 67-residue chain is Small, acid-soluble spore protein 2 (67 aa).

This sequence belongs to the alpha/beta-type SASP family.

Functionally, SASP are bound to spore DNA. They are double-stranded DNA-binding proteins that cause DNA to change to an a-like conformation. They protect the DNA backbone from chemical and enzymatic cleavage and are thus involved in dormant spore's high resistance to UV light. In Sporosarcina ureae, this protein is Small, acid-soluble spore protein 2 (Su-2).